The following is a 412-amino-acid chain: Inositol polyphosphate-5-phosphatase A (412 aa).

Residue C409 is the site of S-farnesyl cysteine attachment. The propeptide at 410-412 (VVQ) is removed in mature form.

This sequence belongs to the inositol 1,4,5-trisphosphate 5-phosphatase type I family. Interacts with TASOR. In terms of processing, isoprenylation at Cys-409 is required for localization at the membrane.

The protein resides in the cell membrane. The protein localises to the cell projection. Its subcellular location is the dendrite. The catalysed reaction is 1D-myo-inositol 1,4,5-trisphosphate + H2O = 1D-myo-inositol 1,4-bisphosphate + phosphate. It carries out the reaction 1D-myo-inositol 1,3,4,5-tetrakisphosphate + H2O = 1D-myo-inositol 1,3,4-trisphosphate + phosphate. Inhibited by EDTA and 2,3-bisphosphoglycerate. Functionally, phosphatase that specifically hydrolyzes the 5-phosphate of inositol 1,4,5-trisphosphate to inositol 1,4-bisphosphate, and inositol 1,3,4,5-tetrasphosphate to inositol 1,3,4-trisphosphate. Plays a crucial role in the survival of cerebellar Purkinje cells. The chain is Inositol polyphosphate-5-phosphatase A (INPP5A) from Canis lupus familiaris (Dog).